Consider the following 144-residue polypeptide: Putative pre-16S rRNA nuclease (144 aa).

The protein belongs to the YqgF nuclease family.

The protein resides in the cytoplasm. Its function is as follows. Could be a nuclease involved in processing of the 5'-end of pre-16S rRNA. The protein is Putative pre-16S rRNA nuclease of Chlorobium phaeobacteroides (strain BS1).